The chain runs to 291 residues: 4-hydroxy-tetrahydrodipicolinate synthase (291 aa).

Threonine 45 serves as a coordination point for pyruvate. Catalysis depends on tyrosine 133, which acts as the Proton donor/acceptor. Lysine 161 functions as the Schiff-base intermediate with substrate in the catalytic mechanism. Isoleucine 203 lines the pyruvate pocket.

The protein belongs to the DapA family. Homotetramer; dimer of dimers.

The protein localises to the cytoplasm. The enzyme catalyses L-aspartate 4-semialdehyde + pyruvate = (2S,4S)-4-hydroxy-2,3,4,5-tetrahydrodipicolinate + H2O + H(+). The protein operates within amino-acid biosynthesis; L-lysine biosynthesis via DAP pathway; (S)-tetrahydrodipicolinate from L-aspartate: step 3/4. Functionally, catalyzes the condensation of (S)-aspartate-beta-semialdehyde [(S)-ASA] and pyruvate to 4-hydroxy-tetrahydrodipicolinate (HTPA). In Neisseria meningitidis serogroup C (strain 053442), this protein is 4-hydroxy-tetrahydrodipicolinate synthase.